The chain runs to 37 residues: Large ribosomal subunit protein bL36 (37 aa).

It belongs to the bacterial ribosomal protein bL36 family.

The chain is Large ribosomal subunit protein bL36 from Prochlorococcus marinus (strain MIT 9313).